An 868-amino-acid polypeptide reads, in one-letter code: mRNA-capping enzyme (868 aa).

The N6-GMP-lysine intermediate role is filled by Lys282. An mRNA cap 0 methyltransferase domain is found at 594–868 (GIYRAQTALI…LFGFICLRKN (275 aa)). Residues Lys607, Gly624, Asp646, and 710 to 712 (LFI) contribute to the S-adenosyl-L-methionine site.

In the N-terminal section; belongs to the dsDNA virus mRNA guanylyltransferase family. The protein in the C-terminal section; belongs to the class I-like SAM-binding methyltransferase superfamily. mRNA cap 0 methyltransferase family. Part of the viral DNA-directed RNA polymerase that consists of 8 polII-like subunits (RPB1, RPB2, RPB3, RPB5, RPB6, RPB7, RPB9, RPB10), a capping enzyme and a termination factor.

The protein localises to the virion. The catalysed reaction is a 5'-end triphospho-ribonucleoside in mRNA + H2O = a 5'-end diphospho-ribonucleoside in mRNA + phosphate + H(+). The enzyme catalyses a 5'-end diphospho-ribonucleoside in mRNA + GTP + H(+) = a 5'-end (5'-triphosphoguanosine)-ribonucleoside in mRNA + diphosphate. It catalyses the reaction a 5'-end (5'-triphosphoguanosine)-ribonucleoside in mRNA + S-adenosyl-L-methionine = a 5'-end (N(7)-methyl 5'-triphosphoguanosine)-ribonucleoside in mRNA + S-adenosyl-L-homocysteine. The protein operates within mRNA processing; mRNA capping. In terms of biological role, probably catalyzes the second reaction in the mRNA cap formation pathway. Forms a covalent complex with GTP. The sequence is that of mRNA-capping enzyme from African swine fever virus (isolate Tick/South Africa/Pretoriuskop Pr4/1996) (ASFV).